The following is a 263-amino-acid chain: 4-hydroxy-tetrahydrodipicolinate reductase (263 aa).

Residues 8–13, aspartate 34, 99–101, and 125–128 contribute to the NAD(+) site; these read GASGRM, GTT, and SPNY. Histidine 157 serves as the catalytic Proton donor/acceptor. Position 158 (histidine 158) interacts with (S)-2,3,4,5-tetrahydrodipicolinate. The Proton donor role is filled by lysine 161. 167–168 contributes to the (S)-2,3,4,5-tetrahydrodipicolinate binding site; it reads GT.

This sequence belongs to the DapB family.

The protein localises to the cytoplasm. The catalysed reaction is (S)-2,3,4,5-tetrahydrodipicolinate + NAD(+) + H2O = (2S,4S)-4-hydroxy-2,3,4,5-tetrahydrodipicolinate + NADH + H(+). It catalyses the reaction (S)-2,3,4,5-tetrahydrodipicolinate + NADP(+) + H2O = (2S,4S)-4-hydroxy-2,3,4,5-tetrahydrodipicolinate + NADPH + H(+). It functions in the pathway amino-acid biosynthesis; L-lysine biosynthesis via DAP pathway; (S)-tetrahydrodipicolinate from L-aspartate: step 4/4. In terms of biological role, catalyzes the conversion of 4-hydroxy-tetrahydrodipicolinate (HTPA) to tetrahydrodipicolinate. The chain is 4-hydroxy-tetrahydrodipicolinate reductase from Methanococcoides burtonii (strain DSM 6242 / NBRC 107633 / OCM 468 / ACE-M).